Reading from the N-terminus, the 288-residue chain is Elongation factor Ts (288 aa).

The tract at residues 82 to 85 is involved in Mg(2+) ion dislocation from EF-Tu; sequence TDFV.

Belongs to the EF-Ts family.

The protein localises to the cytoplasm. Associates with the EF-Tu.GDP complex and induces the exchange of GDP to GTP. It remains bound to the aminoacyl-tRNA.EF-Tu.GTP complex up to the GTP hydrolysis stage on the ribosome. In Chlorobium phaeobacteroides (strain BS1), this protein is Elongation factor Ts.